Reading from the N-terminus, the 233-residue chain is Small ribosomal subunit protein uS3 (233 aa).

A KH type-2 domain is found at 39–107 (IRTFLKRKLY…EVNINIKEER (69 aa)). The disordered stretch occupies residues 211–233 (GVQPEKTEESAPAKKPRRARRGK). The span at 213–222 (QPEKTEESAP) shows a compositional bias: basic and acidic residues. Positions 224–233 (KKPRRARRGK) are enriched in basic residues.

Belongs to the universal ribosomal protein uS3 family. As to quaternary structure, part of the 30S ribosomal subunit. Forms a tight complex with proteins S10 and S14.

In terms of biological role, binds the lower part of the 30S subunit head. Binds mRNA in the 70S ribosome, positioning it for translation. This is Small ribosomal subunit protein uS3 from Campylobacter lari (strain RM2100 / D67 / ATCC BAA-1060).